A 684-amino-acid polypeptide reads, in one-letter code: Fidgetin-like protein 2 (684 aa).

The span at 27–41 (PEQHLDVSSTTSSPA) shows a compositional bias: polar residues. Disordered regions lie at residues 27–48 (PEQHLDVSSTTSSPAHKSELYS), 99–179 (PGAF…PHSS), and 292–403 (LDEE…SDPM). The segment covering 160–179 (SNLSDSGYSGSSSCSGPHSS) has biased composition (low complexity). A431 is an ATP binding site.

It belongs to the AAA ATPase family. Requires Mg(2+) as cofactor. Highly expressed in vascular endothelial cells and neuronal cells.

The protein localises to the cytoplasm. It localises to the cell cortex. It catalyses the reaction ATP + H2O = ADP + phosphate + H(+). In terms of biological role, microtubule-severing enzyme that negatively regulates cell migration and wound healing. In migrating cells, targets dynamic microtubules (MTs) at the leading edge and severs them, thereby suppressing motility. Negative regulator of axon regeneration that suppresses axonal growth by selectively severing dynamic MTs in the distal axon shaft and growth cone. Contributes to proper cell branching during endothelial and neuronal development. The protein is Fidgetin-like protein 2 (fignl2) of Danio rerio (Zebrafish).